Here is a 641-residue protein sequence, read N- to C-terminus: MNAYSHNLLKEKYPTKQDVITEIMNLEAILHLPKGTEHFVSDLHGEYTAFDHVLRNGSGSIKQKIQDYFSDRMTEQTMQDFALLIYYPEDELALVKKKLRTENELQQWYLDNISHLLEFLELSGSKYTRSKVRKALNPNFVYITEELLYNDPQEFNKRSYINQLLKNILKLDQADKFIIATCYTIQRLVVDHLHVLGDVYDRGEEPDKIMDRLMNYHSVDMQWGNHDLLWLGAMAGSKLCMLNLLRICARYNNLNIIEDAYGINLRHLSRFAEEQYEDNPQFRPKLTNGDGYRFNGEKLQITQIHQAVAMMQFKLEGQVIARRPELKMDDRDLLNKIDYKKNVINLNGKEYSLQNTCFNTVDPKNPNELTDEENAIVDELLISIQHSTKLKRHLDFMMNKGSMYRTYNGNLLFHGCIPADEEGNFCSLKIGSKEYSGKKLFDFSEKMIRKAYSKPNVKDDFATDFMWYLWQGALSPLFGKKSMTTFERYFIADKACHEEVKNPYYKLRENKDFCIKILQEFGFAGDDTNHIINGHTPVKRGHNAICAEGYMLVIDGGYSKAYQPTTGIAGYTLLYNSYGLQLVSHQPFTSKQDAIRSGKDIVSTVRVVKHELQRKSVADTDIGENIKEKIRVLYNLLRNYD.

It belongs to the FBPase class 3 family. It depends on Mn(2+) as a cofactor.

The catalysed reaction is beta-D-fructose 1,6-bisphosphate + H2O = beta-D-fructose 6-phosphate + phosphate. It functions in the pathway carbohydrate biosynthesis; gluconeogenesis. This chain is Fructose-1,6-bisphosphatase class 3, found in Ligilactobacillus salivarius (strain UCC118) (Lactobacillus salivarius).